The sequence spans 272 residues: MTLQEQIMKALHVQPVIDPKAEIRKRVDFLKDYVKKTGAKGFVLGISGGQDSTLAGRLAQLAVEEIRNEGGNATFIAVRLPYKVQKDEDDAQLALQFIQADQSVAFDIASTVDAFSNQYENLLGESLTDFNKGNVKARIRMVTQYAIGGQNSLLVIGTDHAAEAVTGFFTKFGDGGADLLPLTGLTKRQGRALLQELGADERLYLKMPTADLLDEKPGQADETELGITYDQLDDYLEGKAVPTDVAEKIEKRYTVSEHKRQVPASMFDDWWK.

Residue 45–52 (GISGGQDS) coordinates ATP. D51 is a binding site for Mg(2+). R138 is a binding site for deamido-NAD(+). Residue T158 coordinates ATP. E163 lines the Mg(2+) pocket. Deamido-NAD(+) contacts are provided by K171 and D178. 2 residues coordinate ATP: K187 and T209. 258–259 (HK) provides a ligand contact to deamido-NAD(+).

Belongs to the NAD synthetase family. Homodimer.

It carries out the reaction deamido-NAD(+) + NH4(+) + ATP = AMP + diphosphate + NAD(+) + H(+). Its pathway is cofactor biosynthesis; NAD(+) biosynthesis; NAD(+) from deamido-NAD(+) (ammonia route): step 1/1. Catalyzes the ATP-dependent amidation of deamido-NAD to form NAD. Uses ammonia as a nitrogen source. This is NH(3)-dependent NAD(+) synthetase from Bacillus cereus (strain ATCC 10987 / NRS 248).